A 271-amino-acid polypeptide reads, in one-letter code: Shikimate dehydrogenase-like protein HI_0607 (271 aa).

K67 acts as the Proton donor/acceptor in catalysis. D103 is a binding site for substrate. NADP(+) is bound by residues 126-130 (GSGGM), K154, and S184.

The protein belongs to the shikimate dehydrogenase-like family. As to quaternary structure, homodimer.

The catalysed reaction is shikimate + NADP(+) = 3-dehydroshikimate + NADPH + H(+). In terms of biological role, in vitro, is able to catalyze the NADP(+)-dependent oxidation of shikimate to 3-dehydroshikimate. However, has much lower activity than classical shikimate dehydrogenases AroE, indicating that shikimate may not be the biological substrate. Cannot utilize NAD(+) instead of NADP(+). Is not able to catalyze the oxidation of quinate. This chain is Shikimate dehydrogenase-like protein HI_0607, found in Haemophilus influenzae (strain ATCC 51907 / DSM 11121 / KW20 / Rd).